The primary structure comprises 564 residues: MESLQIYLIWSVYGVAIAILIAVASTFICAYQTPRDRSPSVTLICIISITVLLATVLLLPVDIALVSSITSSALGRRKSWATQAEVDKITFSLTIVYYSLYTVDALLCLIGIPFTYFWYEEYDEVAAEAGQQTAGQRFWAAFKYTLFFVAILIVLFLVGFFIPTSRNLAGHDSDFLRRLFTEDRGQHALTFSVGILTTLGLSLYIIYTSSGLARLPVLLMKTAPSFSSPSLIASTAMQLDSNRERQRQLDGRCGGDTALLSSKDRRELDSLVREERTLTRRQRLAEGAQEERRSWPIKVYHKMEAVLHPFKLLAGFVLLLAALFLWTSLCVTAIDKLMNSPCKHRCGYILERVNIFNPVNWVLIQSSRVFPVDYVIFTLIVLFLFCSSVVGIAAFGIRFLWIQIFSIRKGRTSPQALLLLTSMLMLITLALNYSVAVILAPQYATFGPQTFCDMPPVSSGPQPDCSRARNLIKSCSEKAENIGANGLCTPSVASTLLNQMTSNFPFFGAVFFWAQFIFLGLYLLVLVVSVTRSPRLDEHQLDEDAEEAEEERLLARTGRRINTA.

9 consecutive transmembrane segments (helical) span residues 8–28, 41–61, 94–114, 144–164, 188–208, 312–332, 375–395, 418–438, and 506–526; these read LIWS…STFI, VTLI…LLPV, TIVY…GIPF, YTLF…FIPT, ALTF…IIYT, LLAG…LCVT, VIFT…IAAF, LLLT…VAVI, and FFGA…LLVL.

The protein belongs to the LIMR family. LMBRD1 subfamily.

The protein resides in the lysosome membrane. In terms of biological role, probable lysosomal cobalamin transporter. Required to export cobalamin from lysosomes allowing its conversion to cofactors. This is Probable lysosomal cobalamin transporter from Aspergillus clavatus (strain ATCC 1007 / CBS 513.65 / DSM 816 / NCTC 3887 / NRRL 1 / QM 1276 / 107).